Reading from the N-terminus, the 264-residue chain is Thiazole synthase (264 aa).

Lysine 106 acts as the Schiff-base intermediate with DXP in catalysis. 1-deoxy-D-xylulose 5-phosphate contacts are provided by residues glycine 167, 193 to 194, and 215 to 216; these read AG and NT.

The protein belongs to the ThiG family. As to quaternary structure, homotetramer. Forms heterodimers with either ThiH or ThiS.

It localises to the cytoplasm. It catalyses the reaction [ThiS sulfur-carrier protein]-C-terminal-Gly-aminoethanethioate + 2-iminoacetate + 1-deoxy-D-xylulose 5-phosphate = [ThiS sulfur-carrier protein]-C-terminal Gly-Gly + 2-[(2R,5Z)-2-carboxy-4-methylthiazol-5(2H)-ylidene]ethyl phosphate + 2 H2O + H(+). The protein operates within cofactor biosynthesis; thiamine diphosphate biosynthesis. Catalyzes the rearrangement of 1-deoxy-D-xylulose 5-phosphate (DXP) to produce the thiazole phosphate moiety of thiamine. Sulfur is provided by the thiocarboxylate moiety of the carrier protein ThiS. In vitro, sulfur can be provided by H(2)S. This chain is Thiazole synthase, found in Xylella fastidiosa (strain 9a5c).